Consider the following 148-residue polypeptide: Large ribosomal subunit protein bL9 (148 aa).

Belongs to the bacterial ribosomal protein bL9 family.

In terms of biological role, binds to the 23S rRNA. The sequence is that of Large ribosomal subunit protein bL9 from Parafrankia sp. (strain EAN1pec).